A 378-amino-acid polypeptide reads, in one-letter code: Chaperone protein DnaJ (378 aa).

Residues 5-70 (DYYETLGVSQ…QKRAAYDQYG (66 aa)) enclose the J domain. A CR-type zinc finger spans residues 134 to 212 (GKSLEIKVPT…CRGQGRVEKT (79 aa)). Zn(2+) is bound by residues cysteine 147, cysteine 150, cysteine 164, cysteine 167, cysteine 186, cysteine 189, cysteine 200, and cysteine 203. CXXCXGXG motif repeat units follow at residues 147–154 (CEPCDGSG), 164–171 (CSTCHGHG), 186–193 (CPTCSGKG), and 200–207 (CTSCRGQG).

This sequence belongs to the DnaJ family. Homodimer. It depends on Zn(2+) as a cofactor.

Its subcellular location is the cytoplasm. Participates actively in the response to hyperosmotic and heat shock by preventing the aggregation of stress-denatured proteins and by disaggregating proteins, also in an autonomous, DnaK-independent fashion. Unfolded proteins bind initially to DnaJ; upon interaction with the DnaJ-bound protein, DnaK hydrolyzes its bound ATP, resulting in the formation of a stable complex. GrpE releases ADP from DnaK; ATP binding to DnaK triggers the release of the substrate protein, thus completing the reaction cycle. Several rounds of ATP-dependent interactions between DnaJ, DnaK and GrpE are required for fully efficient folding. Also involved, together with DnaK and GrpE, in the DNA replication of plasmids through activation of initiation proteins. This Colwellia psychrerythraea (strain 34H / ATCC BAA-681) (Vibrio psychroerythus) protein is Chaperone protein DnaJ.